Reading from the N-terminus, the 120-residue chain is Chaperonin GroEL (120 aa).

ATP is bound at residue 23–27; the sequence is DGTTT.

Belongs to the chaperonin (HSP60) family. In terms of assembly, forms a cylinder of 14 subunits composed of two heptameric rings stacked back-to-back. Interacts with the co-chaperonin GroES.

It is found in the cytoplasm. The catalysed reaction is ATP + H2O + a folded polypeptide = ADP + phosphate + an unfolded polypeptide.. In terms of biological role, together with its co-chaperonin GroES, plays an essential role in assisting protein folding. The GroEL-GroES system forms a nano-cage that allows encapsulation of the non-native substrate proteins and provides a physical environment optimized to promote and accelerate protein folding. The protein is Chaperonin GroEL of Mycobacterium asiaticum.